The chain runs to 599 residues: DNA-directed RNA polymerase III subunit RPC3 (599 aa).

The interval 350–375 is disordered; it reads PKKRSASNGDDERPTKKIKTEDSDDI. Residues 359–370 are compositionally biased toward basic and acidic residues; the sequence is DDERPTKKIKTE. A leucine-zipper region spans residues 528 to 549; the sequence is LIFSMAEILSNIQAFREDHKIL.

This sequence belongs to the RNA polymerase beta chain family. In terms of assembly, component of the RNA polymerase III (Pol III) complex consisting of 17 subunits.

The protein resides in the nucleus. Functionally, DNA-dependent RNA polymerase catalyzes the transcription of DNA into RNA using the four ribonucleoside triphosphates as substrates. Specific core component of RNA polymerase III which synthesizes small RNAs, such as 5S rRNA and tRNAs. In Scheffersomyces stipitis (strain ATCC 58785 / CBS 6054 / NBRC 10063 / NRRL Y-11545) (Yeast), this protein is DNA-directed RNA polymerase III subunit RPC3 (RPC82).